The primary structure comprises 197 residues: GTP cyclohydrolase-2 (197 aa).

50–54 is a GTP binding site; that stretch reads RIHSE. Residues cysteine 55, cysteine 66, and cysteine 68 each coordinate Zn(2+). Residues glutamine 71, 93–95, and threonine 115 contribute to the GTP site; that span reads EGR. Residue aspartate 127 is the Proton acceptor of the active site. The active-site Nucleophile is the arginine 129. Threonine 150 and lysine 155 together coordinate GTP.

The protein belongs to the GTP cyclohydrolase II family. Zn(2+) is required as a cofactor.

It carries out the reaction GTP + 4 H2O = 2,5-diamino-6-hydroxy-4-(5-phosphoribosylamino)-pyrimidine + formate + 2 phosphate + 3 H(+). It functions in the pathway cofactor biosynthesis; riboflavin biosynthesis; 5-amino-6-(D-ribitylamino)uracil from GTP: step 1/4. In terms of biological role, catalyzes the conversion of GTP to 2,5-diamino-6-ribosylamino-4(3H)-pyrimidinone 5'-phosphate (DARP), formate and pyrophosphate. The sequence is that of GTP cyclohydrolase-2 from Neisseria meningitidis serogroup C (strain 053442).